The chain runs to 347 residues: Phenylalanine--tRNA ligase alpha subunit (347 aa).

Position 259 (glutamate 259) interacts with Mg(2+).

Belongs to the class-II aminoacyl-tRNA synthetase family. Phe-tRNA synthetase alpha subunit type 1 subfamily. Tetramer of two alpha and two beta subunits. It depends on Mg(2+) as a cofactor.

The protein localises to the cytoplasm. The catalysed reaction is tRNA(Phe) + L-phenylalanine + ATP = L-phenylalanyl-tRNA(Phe) + AMP + diphosphate + H(+). This is Phenylalanine--tRNA ligase alpha subunit from Oenococcus oeni (strain ATCC BAA-331 / PSU-1).